Consider the following 209-residue polypeptide: Peptide methionine sulfoxide reductase MsrA (209 aa).

Residue Cys14 is part of the active site. Positions Phe183–His209 are disordered. Polar residues predominate over residues Leu199–His209.

It belongs to the MsrA Met sulfoxide reductase family.

The catalysed reaction is L-methionyl-[protein] + [thioredoxin]-disulfide + H2O = L-methionyl-(S)-S-oxide-[protein] + [thioredoxin]-dithiol. It catalyses the reaction [thioredoxin]-disulfide + L-methionine + H2O = L-methionine (S)-S-oxide + [thioredoxin]-dithiol. In terms of biological role, has an important function as a repair enzyme for proteins that have been inactivated by oxidation. Catalyzes the reversible oxidation-reduction of methionine sulfoxide in proteins to methionine. The protein is Peptide methionine sulfoxide reductase MsrA of Pseudomonas fluorescens.